Here is a 512-residue protein sequence, read N- to C-terminus: 2-isopropylmalate synthase (512 aa).

Positions 5 to 268 (LIIFDTTLRD…ELGIDTQHIV (264 aa)) constitute a Pyruvate carboxyltransferase domain. Mn(2+)-binding residues include D14, H202, H204, and N239. The segment at 394-512 (GFVSLSQRSE…SKAERVAAQG (119 aa)) is regulatory domain.

This sequence belongs to the alpha-IPM synthase/homocitrate synthase family. LeuA type 1 subfamily. Homodimer. Requires Mn(2+) as cofactor.

It localises to the cytoplasm. It carries out the reaction 3-methyl-2-oxobutanoate + acetyl-CoA + H2O = (2S)-2-isopropylmalate + CoA + H(+). It participates in amino-acid biosynthesis; L-leucine biosynthesis; L-leucine from 3-methyl-2-oxobutanoate: step 1/4. Its function is as follows. Catalyzes the condensation of the acetyl group of acetyl-CoA with 3-methyl-2-oxobutanoate (2-ketoisovalerate) to form 3-carboxy-3-hydroxy-4-methylpentanoate (2-isopropylmalate). In Paracidovorax citrulli (strain AAC00-1) (Acidovorax citrulli), this protein is 2-isopropylmalate synthase.